We begin with the raw amino-acid sequence, 412 residues long: BSD domain-containing protein 1 (412 aa).

Positions 146 to 198 (WLAYWDPEHRKAEISELLVTSPSIRALYTKMVPAAVSHSEFWQRYFYKVHQLE) constitute a BSD domain. 2 stretches are compositionally biased toward basic and acidic residues: residues 208-219 (KQRADQSVHSEE) and 255-271 (HVED…RDHT). Disordered regions lie at residues 208–228 (KQRA…EEED) and 255–383 (HVED…EKDF). Low complexity predominate over residues 272–287 (SITSPSESSESISPIT). Basic and acidic residues predominate over residues 340–351 (THREDPPSDLRV). Residues 355-374 (NSDSGKSTPSNNGQKGSSTD) are compositionally biased toward polar residues.

The polypeptide is BSD domain-containing protein 1 (bsdc1) (Xenopus tropicalis (Western clawed frog)).